Here is a 393-residue protein sequence, read N- to C-terminus: Formate-dependent phosphoribosylglycinamide formyltransferase (393 aa).

Residues 22–23 (EL) and E82 contribute to the N(1)-(5-phospho-beta-D-ribosyl)glycinamide site. ATP is bound by residues R114, K155, 160 to 165 (SSGHGQ), 195 to 198 (EGFV), and E203. The 190-residue stretch at 119 to 308 (RLAAEELGLP…QFALHARAVL (190 aa)) folds into the ATP-grasp domain. The Mg(2+) site is built by E267 and E279. Residues D286, K356, and 363–364 (RR) each bind N(1)-(5-phospho-beta-D-ribosyl)glycinamide.

The protein belongs to the PurK/PurT family. As to quaternary structure, homodimer.

The catalysed reaction is N(1)-(5-phospho-beta-D-ribosyl)glycinamide + formate + ATP = N(2)-formyl-N(1)-(5-phospho-beta-D-ribosyl)glycinamide + ADP + phosphate + H(+). Its pathway is purine metabolism; IMP biosynthesis via de novo pathway; N(2)-formyl-N(1)-(5-phospho-D-ribosyl)glycinamide from N(1)-(5-phospho-D-ribosyl)glycinamide (formate route): step 1/1. Involved in the de novo purine biosynthesis. Catalyzes the transfer of formate to 5-phospho-ribosyl-glycinamide (GAR), producing 5-phospho-ribosyl-N-formylglycinamide (FGAR). Formate is provided by PurU via hydrolysis of 10-formyl-tetrahydrofolate. The polypeptide is Formate-dependent phosphoribosylglycinamide formyltransferase (Parabacteroides distasonis (strain ATCC 8503 / DSM 20701 / CIP 104284 / JCM 5825 / NCTC 11152)).